A 113-amino-acid polypeptide reads, in one-letter code: Nucleoid-associated protein FMG_0513 (113 aa).

The interval 1 to 44 (MGNKFRGGMPGMGNMGNMMKQMQKMQRQMEETQKRLEETEVTAT) is disordered. Positions 15–26 (MGNMMKQMQKMQ) are enriched in low complexity. Positions 27 to 38 (RQMEETQKRLEE) are enriched in basic and acidic residues.

The protein belongs to the YbaB/EbfC family. Homodimer.

The protein resides in the cytoplasm. It localises to the nucleoid. Binds to DNA and alters its conformation. May be involved in regulation of gene expression, nucleoid organization and DNA protection. The protein is Nucleoid-associated protein FMG_0513 of Finegoldia magna (strain ATCC 29328 / DSM 20472 / WAL 2508) (Peptostreptococcus magnus).